Reading from the N-terminus, the 359-residue chain is Aromatic amino acid aminotransferase (359 aa).

Positions 1 to 42 are disordered; the sequence is MSERKPPYLRSALDSIPPYRPGRKVVGPDGRSAKLSSNESPF. Lys-223 carries the post-translational modification N6-(pyridoxal phosphate)lysine.

Belongs to the class-II pyridoxal-phosphate-dependent aminotransferase family. As to quaternary structure, homodimer. Pyridoxal 5'-phosphate serves as cofactor.

It carries out the reaction an aromatic L-alpha-amino acid + 2-oxoglutarate = an aromatic oxo-acid + L-glutamate. In terms of biological role, aminotransferase that catalyzes the conversion of aromatic amino acids and 2-oxoglutarate into corresponding aromatic oxo acids and L-glutamate. This chain is Aromatic amino acid aminotransferase, found in Thermobifida fusca (strain YX).